A 111-amino-acid chain; its full sequence is Phosphoribosyl-ATP pyrophosphatase (111 aa).

This sequence belongs to the PRA-PH family.

The protein resides in the cytoplasm. The enzyme catalyses 1-(5-phospho-beta-D-ribosyl)-ATP + H2O = 1-(5-phospho-beta-D-ribosyl)-5'-AMP + diphosphate + H(+). The protein operates within amino-acid biosynthesis; L-histidine biosynthesis; L-histidine from 5-phospho-alpha-D-ribose 1-diphosphate: step 2/9. The chain is Phosphoribosyl-ATP pyrophosphatase from Pseudomonas paraeruginosa (strain DSM 24068 / PA7) (Pseudomonas aeruginosa (strain PA7)).